A 761-amino-acid chain; its full sequence is BMP/retinoic acid-inducible neural-specific protein 1 (761 aa).

Positions 1 to 19 (MNWRFVELLYFLFIWGRIS) are cleaved as a signal peptide. Residues 68-251 (RYKIYREFAR…FVQSALSYIM (184 aa)) form the MACPF domain. 7 N-linked (GlcNAc...) asparagine glycosylation sites follow: N156, N433, N443, N553, N599, N631, and N677.

It belongs to the BRINP family. In terms of tissue distribution, highly expressed in brain. Weakly expressed in heart, lung, skeletal muscle, kidney, thymus, prostate, testis and small intestine.

The protein localises to the cytoplasm. Its function is as follows. Plays a role in neurogenesis and brain development. May suppress cell cycle progression in postmitotic neurons by inhibiting G1/S transition. This is BMP/retinoic acid-inducible neural-specific protein 1 (BRINP1) from Homo sapiens (Human).